Here is a 632-residue protein sequence, read N- to C-terminus: 1-deoxy-D-xylulose-5-phosphate synthase (632 aa).

Thiamine diphosphate-binding positions include His79 and 120 to 122 (GHA). Asp152 serves as a coordination point for Mg(2+). Residues 153–154 (GA), Asn181, Phe293, and Glu377 each bind thiamine diphosphate. Asn181 contributes to the Mg(2+) binding site.

Belongs to the transketolase family. DXPS subfamily. Homodimer. Mg(2+) is required as a cofactor. Thiamine diphosphate serves as cofactor.

It carries out the reaction D-glyceraldehyde 3-phosphate + pyruvate + H(+) = 1-deoxy-D-xylulose 5-phosphate + CO2. It functions in the pathway metabolic intermediate biosynthesis; 1-deoxy-D-xylulose 5-phosphate biosynthesis; 1-deoxy-D-xylulose 5-phosphate from D-glyceraldehyde 3-phosphate and pyruvate: step 1/1. Its function is as follows. Catalyzes the acyloin condensation reaction between C atoms 2 and 3 of pyruvate and glyceraldehyde 3-phosphate to yield 1-deoxy-D-xylulose-5-phosphate (DXP). The sequence is that of 1-deoxy-D-xylulose-5-phosphate synthase from Parabacteroides distasonis (strain ATCC 8503 / DSM 20701 / CIP 104284 / JCM 5825 / NCTC 11152).